Reading from the N-terminus, the 496-residue chain is Glycylpeptide N-tetradecanoyltransferase 1 (496 aa).

A disordered region spans residues 1 to 82 (MADESETAVK…SAQDQPVKMN (82 aa)). Residues Ser-31 and Ser-47 each carry the phosphoserine modification. The segment covering 55–66 (KKKKKKQKKKKE) has biased composition (basic residues). Ser-83 is subject to Phosphoserine. Positions 118, 119, 120, 247, 248, 249, 250, 256, 258, 259, and 260 each coordinate tetradecanoyl-CoA.

Belongs to the NMT family.

It localises to the cytoplasm. The protein resides in the cytosol. It is found in the membrane. The catalysed reaction is N-terminal glycyl-[protein] + tetradecanoyl-CoA = N-tetradecanoylglycyl-[protein] + CoA + H(+). It catalyses the reaction N-terminal glycyl-L-lysyl-[protein] + tetradecanoyl-CoA = N-terminal glycyl-(N(6)-tetradecanoyl)-L-lysyl-[protein] + CoA + H(+). Functionally, adds a myristoyl group to the N-terminal glycine residue of certain cellular and viral proteins. Also able to mediate N-terminal lysine myristoylation of proteins: catalyzes myristoylation of ARF6 on both 'Gly-2' and 'Lys-3'. Lysine myristoylation is required to maintain ARF6 on membranes during the GTPase cycle. This chain is Glycylpeptide N-tetradecanoyltransferase 1 (NMT1), found in Pongo abelii (Sumatran orangutan).